Consider the following 447-residue polypeptide: N-succinylarginine dihydrolase (447 aa).

Substrate contacts are provided by residues 19–28 (AGLSFGNEAS), N110, and 137–138 (HR). Residue E174 is part of the active site. Position 212 (R212) interacts with substrate. H248 is a catalytic residue. Residues D250 and N359 each contribute to the substrate site. C365 acts as the Nucleophile in catalysis.

This sequence belongs to the succinylarginine dihydrolase family. In terms of assembly, homodimer.

It carries out the reaction N(2)-succinyl-L-arginine + 2 H2O + 2 H(+) = N(2)-succinyl-L-ornithine + 2 NH4(+) + CO2. Its pathway is amino-acid degradation; L-arginine degradation via AST pathway; L-glutamate and succinate from L-arginine: step 2/5. Its function is as follows. Catalyzes the hydrolysis of N(2)-succinylarginine into N(2)-succinylornithine, ammonia and CO(2). This chain is N-succinylarginine dihydrolase, found in Escherichia coli O1:K1 / APEC.